A 699-amino-acid polypeptide reads, in one-letter code: Extracellular matrix protein 2 (699 aa).

A signal peptide spans 1 to 20 (MKIAVLFCFFLLIIFQTDFG). The region spanning 101 to 158 (GHCLVKGITMYNKAVWSPEPCTTCLCSDGRVLCDETMCHPQRCPQTVIPEGECCPVCS) is the VWFC domain. Positions 176-186 (EFSGDSSEQRE) are enriched in basic and acidic residues. Positions 176–316 (EFSGDSSEQR…PAPPRGTLRL (141 aa)) are disordered. The span at 212-224 (QSEEDEEVKEEDT) shows a compositional bias: acidic residues. Positions 243-260 (GDSRGGDRKQRPGEERRL) are enriched in basic and acidic residues. Positions 270 to 291 (EEEEDEEEEGEEGEEDEEDEED) are enriched in acidic residues. The Cell attachment site signature appears at 294-296 (RGD). The region spanning 307 to 344 (PAPPRGTLRLPSGCSLSYRTISCINAMLTQIPPLTAPQ) is the LRRNT domain. LRR repeat units lie at residues 368–388 (NLER…GPKA), 394–415 (KLMR…LPST), 416–436 (LEEL…SLSD), 439–459 (QLVT…NPLA), 465–484 (SLAY…QGLP), 486–507 (SIEE…CFNH), 510–530 (KINV…APLA), 536–557 (NLES…LPKS), 558–578 (LLHL…VFGH), 582–602 (GLEY…DRVS), 609–630 (SLRE…IQEM), 632–653 (ALHF…EICN), and 661–684 (NLEH…TFSC). N-linked (GlcNAc...) asparagine glycosylation is present at asparagine 378. The N-linked (GlcNAc...) asparagine glycan is linked to asparagine 449. The N-linked (GlcNAc...) asparagine glycan is linked to asparagine 506.

Belongs to the small leucine-rich proteoglycan (SLRP) family. SLRP class I subfamily. As to quaternary structure, interacts with numerous extracellular matrix proteins. Interacts with MSL1 and RASSF1. As to expression, expressed predominantly in adipose tissue as well as female-specific organs such as mammary gland, ovary, and uterus.

The protein localises to the secreted. It is found in the extracellular space. Its subcellular location is the extracellular matrix. Its function is as follows. Promotes matrix assembly and cell adhesiveness. This Homo sapiens (Human) protein is Extracellular matrix protein 2 (ECM2).